Reading from the N-terminus, the 496-residue chain is Protein TOO MANY MOUTHS (496 aa).

The first 23 residues, 1 to 23 (MARYEFFRQIFIVLSIVSPLVRS), serve as a signal peptide directing secretion. Residues 24–473 (FTVITSDSTA…ATDVSSTSKS (450 aa)) are Extracellular-facing. LRR repeat units lie at residues 158-182 (GSSL…LGNL), 183-208 (TNLK…RFSG), 210-228 (RSLD…GFVL), 229-252 (PALS…LTSC), 254-276 (SLIK…INRL), 277-300 (NQLV…LQGL), 302-325 (SLQA…AFKG), 326-350 (LKNL…LTRL), 351-373 (NSLR…EFRD), and 375-401 (KHLS…VWRM). N-linked (GlcNAc...) asparagine glycosylation is found at Asn-181 and Asn-196. Asn-362 carries an N-linked (GlcNAc...) asparagine glycan. The disordered stretch occupies residues 438–464 (AETSRPAPSGTVQHLSREEDGALPDGA). The chain crosses the membrane as a helical span at residues 474–494 (LGFSYLSAFFLVFPNFIFMLI). The Cytoplasmic segment spans residues 495 to 496 (SS).

Belongs to the RLP family. In terms of assembly, forms heterodimer with ERECTA or ERL1 through their extracellular domains. Not able to form homodimer. Interacts with EPF2 but not with EPF1. Interacts with SERK1, SERK2, SERK3/BAK1 and SERK4. Interacts with EPFL9/STOMAGEN. As to expression, in epidermal cells of developing shoots and leaves, but not in roots. Expressed in the stomatal cell lineage in the developing epidermis. Accumulates strongly in meristemoid mother cells (MMC) and meristemoids, somewhat less in meristemoid sister cells (stomatal-lineage ground cells, SLGC), and is barely detected in pavement cells.

The protein resides in the cell membrane. In terms of biological role, promotes cell fate progression in stomatal development. In leaves, needed to correctly orient spacing divisions, to limit the number of asymmetric divisions in neighbor cells, and to promote the asymmetric (amplifying) divisions of meristemoids. In stems, promotes the conversion of meristemoids into guard mother cells (GMC). Positively regulates CAPRICE (CPC) expression in differentiating stomaless-forming cell files. Forms constitutive complexes with ERECTA and ERL1 involved in the recognition of the stomatal regulatory peptides EPF1, EPF2 and EPFL9/STOMAGEN. Modulates the activity of the ligand-receptor pairs EPF2-ERECTA and EPF1-ERL1 in stomatal development. Functions in a combinatorial specific manner with the ERECTA-family (ERf) receptor kinases in the regulation of the immune response. The chain is Protein TOO MANY MOUTHS from Arabidopsis thaliana (Mouse-ear cress).